An 89-amino-acid chain; its full sequence is Small ribosomal subunit protein uS15 (89 aa).

Belongs to the universal ribosomal protein uS15 family. In terms of assembly, part of the 30S ribosomal subunit. Forms a bridge to the 50S subunit in the 70S ribosome, contacting the 23S rRNA.

Its function is as follows. One of the primary rRNA binding proteins, it binds directly to 16S rRNA where it helps nucleate assembly of the platform of the 30S subunit by binding and bridging several RNA helices of the 16S rRNA. In terms of biological role, forms an intersubunit bridge (bridge B4) with the 23S rRNA of the 50S subunit in the ribosome. The sequence is that of Small ribosomal subunit protein uS15 from Thermodesulfovibrio yellowstonii (strain ATCC 51303 / DSM 11347 / YP87).